The following is a 260-amino-acid chain: UPF0246 protein SCO2297 (260 aa).

This sequence belongs to the UPF0246 family.

This chain is UPF0246 protein SCO2297, found in Streptomyces coelicolor (strain ATCC BAA-471 / A3(2) / M145).